Here is a 664-residue protein sequence, read N- to C-terminus: Glycine--tRNA ligase beta subunit (664 aa).

This sequence belongs to the class-II aminoacyl-tRNA synthetase family. Tetramer of two alpha and two beta subunits.

It localises to the cytoplasm. The catalysed reaction is tRNA(Gly) + glycine + ATP = glycyl-tRNA(Gly) + AMP + diphosphate. In Rickettsia typhi (strain ATCC VR-144 / Wilmington), this protein is Glycine--tRNA ligase beta subunit.